A 338-amino-acid chain; its full sequence is Solute carrier family 35 member B1 homolog (338 aa).

9 consecutive transmembrane segments (helical) span residues F9 to K29, L53 to I73, G84 to M104, T111 to G131, Y135 to Y155, T168 to V188, L213 to I233, L244 to G264, and V284 to A304. Residues K334–S338 carry the Di-lysine motif motif.

The protein belongs to the nucleotide-sugar transporter family. SLC35B subfamily.

The protein localises to the endoplasmic reticulum membrane. Probable sugar transporter. The sequence is that of Solute carrier family 35 member B1 homolog (meigo) from Drosophila melanogaster (Fruit fly).